The chain runs to 334 residues: CRISPR-associated endonuclease Cas1 (334 aa).

Mn(2+)-binding residues include glutamate 161, histidine 226, and glutamate 241.

It belongs to the CRISPR-associated endonuclease Cas1 family. As to quaternary structure, homodimer, forms a heterotetramer with a Cas2 homodimer. Mg(2+) serves as cofactor. The cofactor is Mn(2+).

Its function is as follows. CRISPR (clustered regularly interspaced short palindromic repeat), is an adaptive immune system that provides protection against mobile genetic elements (viruses, transposable elements and conjugative plasmids). CRISPR clusters contain spacers, sequences complementary to antecedent mobile elements, and target invading nucleic acids. CRISPR clusters are transcribed and processed into CRISPR RNA (crRNA). Acts as a dsDNA endonuclease. Involved in the integration of spacer DNA into the CRISPR cassette. The polypeptide is CRISPR-associated endonuclease Cas1 (Methanothermobacter thermautotrophicus (strain ATCC 29096 / DSM 1053 / JCM 10044 / NBRC 100330 / Delta H) (Methanobacterium thermoautotrophicum)).